The sequence spans 72 residues: Tetrahydromethanopterin S-methyltransferase subunit G (72 aa).

A helical membrane pass occupies residues 48 to 68 (IGILYGGFIGLLLFLIYTVVS).

It belongs to the MtrG family. As to quaternary structure, the complex is composed of 8 subunits; MtrA, MtrB, MtrC, MtrD, MtrE, MtrF, MtrG and MtrH.

It is found in the cell membrane. The enzyme catalyses 5-methyl-5,6,7,8-tetrahydromethanopterin + coenzyme M + 2 Na(+)(in) = 5,6,7,8-tetrahydromethanopterin + methyl-coenzyme M + 2 Na(+)(out). The protein operates within one-carbon metabolism; methanogenesis from CO(2); methyl-coenzyme M from 5,10-methylene-5,6,7,8-tetrahydromethanopterin: step 2/2. Part of a complex that catalyzes the formation of methyl-coenzyme M and tetrahydromethanopterin from coenzyme M and methyl-tetrahydromethanopterin. This is an energy-conserving, sodium-ion translocating step. The chain is Tetrahydromethanopterin S-methyltransferase subunit G from Methanosarcina barkeri (strain Fusaro / DSM 804).